A 197-amino-acid chain; its full sequence is Probable calcium-binding protein CML21 (197 aa).

The tract at residues 1-33 (MLRPPPPSSVLTASAAAARPPASVVQPQRQAAH) is disordered. The segment covering 9 to 30 (SVLTASAAAARPPASVVQPQRQ) has biased composition (low complexity). 3 EF-hand domains span residues 37-72 (AETLRLRRVFEMFDRDGDGVITPAELSGALCRLGAR), 126-161 (EKEADMREAFGVFDEDGDGYISAAELQAVLSRMGLP), and 164-197 (ACMARVRDMIAAADRDSDGRVDYEEFKAMMAAGN). Residues Asp50, Asp52, Asp54, Glu61, Asp139, Asp141, Asp143, Tyr145, Glu150, Asp177, Asp179, Asp181, Arg183, and Glu188 each coordinate Ca(2+).

Potential calcium sensor. The chain is Probable calcium-binding protein CML21 (CML21) from Oryza sativa subsp. japonica (Rice).